We begin with the raw amino-acid sequence, 101 residues long: Small ribosomal subunit protein uS14 (101 aa).

Belongs to the universal ribosomal protein uS14 family. Part of the 30S ribosomal subunit. Contacts proteins S3 and S10.

Binds 16S rRNA, required for the assembly of 30S particles and may also be responsible for determining the conformation of the 16S rRNA at the A site. In Methylococcus capsulatus (strain ATCC 33009 / NCIMB 11132 / Bath), this protein is Small ribosomal subunit protein uS14.